The following is a 481-amino-acid chain: UDP-glycosyltransferase 72E2 (481 aa).

The active-site Proton acceptor is His18. His18 provides a ligand contact to an anthocyanidin. Asp111 (charge relay) is an active-site residue. Residues Ala346, Gln348, His363, Trp366, Ser368, and Glu371 each coordinate UDP-alpha-D-glucose. Ala386 provides a ligand contact to an anthocyanidin. Glu387 and Gln388 together coordinate UDP-alpha-D-glucose.

This sequence belongs to the UDP-glycosyltransferase family. As to expression, expressed in seedlings and roots.

It carries out the reaction (E)-4-coumarate + UDP-alpha-D-glucose = 4-O-(beta-D-glucosyl)-trans-4-coumarate + UDP + H(+). The catalysed reaction is (E)-coniferol + UDP-alpha-D-glucose = 4-O-(beta-D-glucosyl)-(E)-coniferol + UDP + H(+). It catalyses the reaction (E)-sinapyl alcohol + UDP-alpha-D-glucose = 4-O-(beta-D-glucosyl)-trans-4-sinapoyl alcohol + UDP + H(+). The enzyme catalyses (E)-sinapate + UDP-alpha-D-glucose = 4-O-(beta-D-glucosyl)-trans-sinapate + UDP + H(+). It carries out the reaction (E)-coniferaldehyde + UDP-alpha-D-glucose = 4-O-(beta-D-glucosyl)-4-(E)-coniferyl aldehyde + UDP + H(+). The catalysed reaction is (E)-sinapaldehyde + UDP-alpha-D-glucose = 4-O-(beta-D-glucosyl)-4-trans-sinapoyl aldehyde + UDP + H(+). Functionally, involved in the O-glucosylation of monolignols (alcohol monomers of lignin). Glucosylates coniferyl alcohol to form coniferyl alcohol 4-O-glucoside. Glucosylates sinapyl alcohol to form sinapyl alcohol 4-O-glucoside. Glucosylates coniferyl aldehyde to form coniferyl aldehyde 4-O-glucoside. Glucosylates sinapyl aldehyde to form sinapyl aldehyde 4-O-glucoside. Possesses low activity with sinapate and ferulate as substrates. This chain is UDP-glycosyltransferase 72E2, found in Arabidopsis thaliana (Mouse-ear cress).